The following is an 878-amino-acid chain: Outer membrane usher protein FimD (878 aa).

A signal peptide spans 1-45 (MSYLNLRLYQRNTQCLHIRKHRLAGFFVRLVVACAFAAQAPLSSA). The cysteines at positions 855 and 877 are disulfide-linked.

The protein belongs to the fimbrial export usher family.

The protein resides in the cell outer membrane. Functionally, involved in the export and assembly of FimA fimbrial subunits across the outer membrane. The sequence is that of Outer membrane usher protein FimD (fimD) from Escherichia coli (strain K12).